The chain runs to 393 residues: NAD(P)H-quinone oxidoreductase subunit H, chloroplastic (393 aa).

This sequence belongs to the complex I 49 kDa subunit family. NDH is composed of at least 16 different subunits, 5 of which are encoded in the nucleus.

It localises to the plastid. The protein resides in the chloroplast thylakoid membrane. The enzyme catalyses a plastoquinone + NADH + (n+1) H(+)(in) = a plastoquinol + NAD(+) + n H(+)(out). It carries out the reaction a plastoquinone + NADPH + (n+1) H(+)(in) = a plastoquinol + NADP(+) + n H(+)(out). In terms of biological role, NDH shuttles electrons from NAD(P)H:plastoquinone, via FMN and iron-sulfur (Fe-S) centers, to quinones in the photosynthetic chain and possibly in a chloroplast respiratory chain. The immediate electron acceptor for the enzyme in this species is believed to be plastoquinone. Couples the redox reaction to proton translocation, and thus conserves the redox energy in a proton gradient. The polypeptide is NAD(P)H-quinone oxidoreductase subunit H, chloroplastic (Draba nemorosa (Woodland whitlowgrass)).